A 170-amino-acid chain; its full sequence is Large ribosomal subunit protein uL11 (170 aa).

This sequence belongs to the universal ribosomal protein uL11 family. In terms of assembly, part of the ribosomal stalk of the 50S ribosomal subunit. Interacts with L10 and the large rRNA to form the base of the stalk. L10 forms an elongated spine to which L12 dimers bind in a sequential fashion forming a multimeric L10(L12)X complex.

Functionally, forms part of the ribosomal stalk which helps the ribosome interact with GTP-bound translation factors. The sequence is that of Large ribosomal subunit protein uL11 from Sulfolobus acidocaldarius (strain ATCC 33909 / DSM 639 / JCM 8929 / NBRC 15157 / NCIMB 11770).